Here is a 665-residue protein sequence, read N- to C-terminus: Probable arginine--tRNA ligase, cytoplasmic (665 aa).

Residues 204 to 206 (SPN), histidine 215, tyrosine 390, aspartate 394, and glutamine 418 contribute to the L-arginine site. Residues 205–216 (PNIAKQMHVGHL) carry the 'HIGH' region motif. The tract at residues 535 to 549 (NTAVYLLYTYTRICS) is interaction with tRNA.

The protein belongs to the class-I aminoacyl-tRNA synthetase family.

It localises to the cytoplasm. Its subcellular location is the cytosol. The enzyme catalyses tRNA(Arg) + L-arginine + ATP = L-arginyl-tRNA(Arg) + AMP + diphosphate. Forms part of a macromolecular complex that catalyzes the attachment of specific amino acids to cognate tRNAs during protein synthesis. This is Probable arginine--tRNA ligase, cytoplasmic from Drosophila melanogaster (Fruit fly).